The following is a 409-amino-acid chain: Putative protein disulfide-isomerase DDB_G0275025 (409 aa).

The first 21 residues, 1-21 (MKLINICIFIFAIICIESTFG), serve as a signal peptide directing secretion. The Thioredoxin domain occupies 28-140 (NVINLTKKNF…AKFSLAKLPS (113 aa)). A disulfide bond links Cys57 and Cys60. The disordered stretch occupies residues 245–273 (SNNDNNNNNNNNNNEESTKTTTTEKDPAS). Over residues 247 to 259 (NDNNNNNNNNNNE) the composition is skewed to low complexity. Residues 260-273 (ESTKTTTTEKDPAS) are compositionally biased toward basic and acidic residues. The Prevents secretion from ER signature appears at 406–409 (KDEL).

It belongs to the protein disulfide isomerase family.

Its subcellular location is the endoplasmic reticulum lumen. It carries out the reaction Catalyzes the rearrangement of -S-S- bonds in proteins.. The chain is Putative protein disulfide-isomerase DDB_G0275025 from Dictyostelium discoideum (Social amoeba).